Consider the following 171-residue polypeptide: UPF0303 protein YPN_2129 (171 aa).

This sequence belongs to the UPF0303 family.

In Yersinia pestis bv. Antiqua (strain Nepal516), this protein is UPF0303 protein YPN_2129.